The primary structure comprises 384 residues: Glucans biosynthesis protein C (384 aa).

The next 10 helical transmembrane spans lie at 17–37 (AWLMLLGIPFHISLIYSTHSW), 54–74 (FIHAFRMQVFFVISGYFSYML), 91–111 (VGIPMLTAIPLLTLPQFILLQ), 140–160 (LWFLLVLVILTTVSIGIFTWF), 173–193 (AISLVRLSLIFFLLGMAYAAI), 212–232 (FIVMQTLFYVPFFILGALAFI), 240–260 (FTTPSRGCTLGAAVAFIAYLL), 274–294 (TESVITMVMGLWMVNVVFSLG), 311–331 (ASLFIYLVHHPLTLFFGAYIT), and 338–358 (LIGFLCGLIFVMGIALILYEI).

Belongs to the acyltransferase 3 family. OpgC subfamily.

It is found in the cell membrane. The protein operates within glycan metabolism; osmoregulated periplasmic glucan (OPG) biosynthesis. Its function is as follows. Necessary for the succinyl substitution of periplasmic glucans. Could catalyze the transfer of succinyl residues from the cytoplasmic side of the membrane to the nascent glucan backbones on the periplasmic side of the membrane. This Salmonella choleraesuis (strain SC-B67) protein is Glucans biosynthesis protein C.